The primary structure comprises 397 residues: Acetate kinase (397 aa).

N8 is a binding site for Mg(2+). K15 is an ATP binding site. A substrate-binding site is contributed by R89. Residue D146 is the Proton donor/acceptor of the active site. ATP-binding positions include 206-210, 281-283, and 329-333; these read HLGNG, DLR, and GVGEN. E382 serves as a coordination point for Mg(2+).

This sequence belongs to the acetokinase family. As to quaternary structure, homodimer. It depends on Mg(2+) as a cofactor. Mn(2+) serves as cofactor.

It is found in the cytoplasm. It carries out the reaction acetate + ATP = acetyl phosphate + ADP. It participates in metabolic intermediate biosynthesis; acetyl-CoA biosynthesis; acetyl-CoA from acetate: step 1/2. In terms of biological role, catalyzes the formation of acetyl phosphate from acetate and ATP. Can also catalyze the reverse reaction. The polypeptide is Acetate kinase (Bacillus mycoides (strain KBAB4) (Bacillus weihenstephanensis)).